The chain runs to 145 residues: Large ribosomal subunit protein bL17 (145 aa).

It belongs to the bacterial ribosomal protein bL17 family. As to quaternary structure, part of the 50S ribosomal subunit. Contacts protein L32.

This Francisella tularensis subsp. holarctica (strain FTNF002-00 / FTA) protein is Large ribosomal subunit protein bL17.